The primary structure comprises 283 residues: Acetyl-coenzyme A carboxylase carboxyl transferase subunit beta (283 aa).

One can recognise a CoA carboxyltransferase N-terminal domain in the interval 27-283; that stretch reads VWVKCERCGE…LLDLHLRGEK (257 aa). The Zn(2+) site is built by Cys31, Cys34, Cys50, and Cys53. The segment at 31 to 53 adopts a C4-type zinc-finger fold; sequence CERCGEILFKKELDKNYKVCLKC.

The protein belongs to the AccD/PCCB family. In terms of assembly, acetyl-CoA carboxylase is a heterohexamer composed of biotin carboxyl carrier protein (AccB), biotin carboxylase (AccC) and two subunits each of ACCase subunit alpha (AccA) and ACCase subunit beta (AccD). The cofactor is Zn(2+).

The protein resides in the cytoplasm. The catalysed reaction is N(6)-carboxybiotinyl-L-lysyl-[protein] + acetyl-CoA = N(6)-biotinyl-L-lysyl-[protein] + malonyl-CoA. It functions in the pathway lipid metabolism; malonyl-CoA biosynthesis; malonyl-CoA from acetyl-CoA: step 1/1. In terms of biological role, component of the acetyl coenzyme A carboxylase (ACC) complex. Biotin carboxylase (BC) catalyzes the carboxylation of biotin on its carrier protein (BCCP) and then the CO(2) group is transferred by the transcarboxylase to acetyl-CoA to form malonyl-CoA. This Pelotomaculum thermopropionicum (strain DSM 13744 / JCM 10971 / SI) protein is Acetyl-coenzyme A carboxylase carboxyl transferase subunit beta.